Reading from the N-terminus, the 465-residue chain is MTSTDGILAGKYPAKAHARRVVEYLRQNGFQGDGVLYLEAQKTRMIEDNDSEQPFRQRRFFFYLSGCLLPDAHLTYHISTDKLTLFIPPLDPESVIWSGLPLSPAQAKELYDVDEVLYTTDVNPTLAHLASKVGFVFAIDGQISDDVSLKSFPDTDKVALKTAIEECRAVKDAYEVAMIRKANDVTSQAHVAVLKAAKSATNERELEAAFIGTCIAQGCREMAYHPIVASGTSSATLHYVNNDEPLIDSSTNKKKLNLLLDAAGEYKAYCADVTRTFPLSGKFSPESREIYDIVLEMQTESLAMLKEGVLWEDVHITAHRVAIKGLLKLGILRGSEEELLEKRVSVAFFPHGLGHYLGMDTHDTGGHANYADKDKMFQYLRVRGKLPAGSVITVEPGVYFCRFIIEPYLKDSELSKYIDADVLEKYWEVGGVRIEDNIHITKEGHENLTTAPKTADQVELMINGS.

4 residues coordinate Mn(2+): aspartate 261, aspartate 272, glutamate 395, and glutamate 435.

Belongs to the peptidase M24B family. Requires Mn(2+) as cofactor.

The enzyme catalyses Release of any N-terminal amino acid, including proline, that is linked to proline, even from a dipeptide or tripeptide.. Its function is as follows. Catalyzes the removal of a penultimate prolyl residue from the N-termini of peptides. In Talaromyces marneffei (strain ATCC 18224 / CBS 334.59 / QM 7333) (Penicillium marneffei), this protein is Probable Xaa-Pro aminopeptidase pepP (pepP).